A 201-amino-acid polypeptide reads, in one-letter code: Peptidyl-tRNA hydrolase (201 aa).

Residue tyrosine 17 participates in tRNA binding. The active-site Proton acceptor is the histidine 22. The tRNA site is built by phenylalanine 76, asparagine 78, and asparagine 124.

It belongs to the PTH family. Monomer.

It localises to the cytoplasm. The catalysed reaction is an N-acyl-L-alpha-aminoacyl-tRNA + H2O = an N-acyl-L-amino acid + a tRNA + H(+). In terms of biological role, hydrolyzes ribosome-free peptidyl-tRNAs (with 1 or more amino acids incorporated), which drop off the ribosome during protein synthesis, or as a result of ribosome stalling. Its function is as follows. Catalyzes the release of premature peptidyl moieties from peptidyl-tRNA molecules trapped in stalled 50S ribosomal subunits, and thus maintains levels of free tRNAs and 50S ribosomes. The protein is Peptidyl-tRNA hydrolase of Nitratidesulfovibrio vulgaris (strain ATCC 29579 / DSM 644 / CCUG 34227 / NCIMB 8303 / VKM B-1760 / Hildenborough) (Desulfovibrio vulgaris).